The sequence spans 357 residues: Carbamoyl phosphate synthase small chain (357 aa).

Positions 1-168 (MSKRLLILED…STTTAYPSPN (168 aa)) are CPSase. The L-glutamine site is built by Ser46, Gly220, and Gly222. The 186-residue stretch at 172–357 (KVVVVDFGLK…FMDLMDNFKK (186 aa)) folds into the Glutamine amidotransferase type-1 domain. Catalysis depends on Cys247, which acts as the Nucleophile. The L-glutamine site is built by Leu248, Gln251, Asn289, Gly291, and Tyr292. Residues His331 and Asp333 contribute to the active site.

The protein belongs to the CarA family. As to quaternary structure, composed of two chains; the small (or glutamine) chain promotes the hydrolysis of glutamine to ammonia, which is used by the large (or ammonia) chain to synthesize carbamoyl phosphate. Tetramer of heterodimers (alpha,beta)4.

It catalyses the reaction hydrogencarbonate + L-glutamine + 2 ATP + H2O = carbamoyl phosphate + L-glutamate + 2 ADP + phosphate + 2 H(+). The enzyme catalyses L-glutamine + H2O = L-glutamate + NH4(+). It participates in amino-acid biosynthesis; L-arginine biosynthesis; carbamoyl phosphate from bicarbonate: step 1/1. The protein operates within pyrimidine metabolism; UMP biosynthesis via de novo pathway; (S)-dihydroorotate from bicarbonate: step 1/3. Functionally, small subunit of the glutamine-dependent carbamoyl phosphate synthetase (CPSase). CPSase catalyzes the formation of carbamoyl phosphate from the ammonia moiety of glutamine, carbonate, and phosphate donated by ATP, constituting the first step of 2 biosynthetic pathways, one leading to arginine and/or urea and the other to pyrimidine nucleotides. The small subunit (glutamine amidotransferase) binds and cleaves glutamine to supply the large subunit with the substrate ammonia. The sequence is that of Carbamoyl phosphate synthase small chain from Lactococcus lactis subsp. lactis (strain IL1403) (Streptococcus lactis).